A 570-amino-acid chain; its full sequence is Methionine--tRNA ligase (570 aa).

Residues 11 to 21 (PYVQTVPHLGN) carry the 'HIGH' region motif. The Zn(2+) site is built by Cys143, Cys146, Cys156, and Cys159. The 'KMSKS' region motif lies at 333 to 337 (KFSKS). Residue Lys336 coordinates ATP.

The protein belongs to the class-I aminoacyl-tRNA synthetase family. MetG type 1 subfamily. The cofactor is Zn(2+).

The protein localises to the cytoplasm. It carries out the reaction tRNA(Met) + L-methionine + ATP = L-methionyl-tRNA(Met) + AMP + diphosphate. Functionally, is required not only for elongation of protein synthesis but also for the initiation of all mRNA translation through initiator tRNA(fMet) aminoacylation. The sequence is that of Methionine--tRNA ligase from Pyrobaculum aerophilum (strain ATCC 51768 / DSM 7523 / JCM 9630 / CIP 104966 / NBRC 100827 / IM2).